The chain runs to 166 residues: NAD(P)H-quinone oxidoreductase subunit I, chloroplastic (166 aa).

4Fe-4S ferredoxin-type domains are found at residues 55-84 and 95-124; these read GRIH…VDWK and LNYS…MTEE. Cys-64, Cys-67, Cys-70, Cys-74, Cys-104, Cys-107, Cys-110, and Cys-114 together coordinate [4Fe-4S] cluster.

The protein belongs to the complex I 23 kDa subunit family. NDH is composed of at least 16 different subunits, 5 of which are encoded in the nucleus. The cofactor is [4Fe-4S] cluster.

It is found in the plastid. Its subcellular location is the chloroplast thylakoid membrane. The enzyme catalyses a plastoquinone + NADH + (n+1) H(+)(in) = a plastoquinol + NAD(+) + n H(+)(out). The catalysed reaction is a plastoquinone + NADPH + (n+1) H(+)(in) = a plastoquinol + NADP(+) + n H(+)(out). NDH shuttles electrons from NAD(P)H:plastoquinone, via FMN and iron-sulfur (Fe-S) centers, to quinones in the photosynthetic chain and possibly in a chloroplast respiratory chain. The immediate electron acceptor for the enzyme in this species is believed to be plastoquinone. Couples the redox reaction to proton translocation, and thus conserves the redox energy in a proton gradient. The protein is NAD(P)H-quinone oxidoreductase subunit I, chloroplastic of Encelia californica (Bush sunflower).